The chain runs to 555 residues: MALNIADLVEHAIDLVPERVALASDGREVTYAQLEERANRLAHYLREQGVEPGDKVGIYSRNTIEAVEAMIAVFKIRAIMINVNYRYVENELQYIFDNSDMVALIHERRYSDKVANVLPSTPLVKTVVVVEDGTDVDFSAYGGIEYEAALAQSSPERDFEDRSADDIYILYTGGTTGHPKGVMWRHEDVWRVLGGGINFMTGEWVKDEWQLAKEGAENPGLVRYPIPPMIHGGAQWALFQSLFSGGKVIMHPEFSGHEVWRIIDDHKVNVIFITGDAMARPMLDALEEGNPKTGKPYDLSTLFAMASSAALFSPSIKDRFLDLLPGKIITDSIGSSETGFGGIGIAEKGKTLGGGPTVKIDESTTVLDDDGNPIEPGSGKVGMVARTGNIPLGYYKDEAKTKATFREYNGIRYSIPGDYARVEADGTVTMLGRGSVSINSGGEKVYPEEVEGALKQHPAVFDALVVGVPDERFGERVSAVVALRDGEQVTLDELMTTARSKIAGYKVPRAVWFVDEIKRSPAGKPDYRWAKDQTGLRPADEVYNNGDGNGAAATG.

ATP is bound by residues 172-180 (TGGTTGHPK), Asp418, Arg433, and Lys524. The disordered stretch occupies residues 525–555 (PDYRWAKDQTGLRPADEVYNNGDGNGAAATG). A compositionally biased stretch (low complexity) spans 544-555 (NNGDGNGAAATG).

It belongs to the ATP-dependent AMP-binding enzyme family.

The catalysed reaction is (25S)-3-oxocholest-4-en-26-oate + ATP + CoA = (25S)-3-oxocholest-4-en-26-oyl-CoA + AMP + diphosphate. It functions in the pathway steroid metabolism; cholesterol metabolism. Functionally, involved in the degradation of the side chains of C-24 branched-chain sterols. Catalyzes the ATP-dependent CoA thioesterification of the sterol 3-oxocholest-4-en-26-oate to yield 3-oxocholest-4-en-26-oyl-CoA. It can also use beta-sitosterol, campesterol and 3beta-hydroxy-5-cholesten-26-oate. The polypeptide is 3-oxocholest-4-en-26-oate--CoA ligase (Rhodococcus rhodochrous).